Reading from the N-terminus, the 215-residue chain is uncharacterized protein (215 aa).

This is an uncharacterized protein from Haemophilus influenzae (strain ATCC 51907 / DSM 11121 / KW20 / Rd).